The chain runs to 310 residues: Olfactory receptor 1496 (310 aa).

The Extracellular segment spans residues 1-23 (MNNQTFITQFLLLGLPIPEEHQH). N-linked (GlcNAc...) asparagine glycosylation occurs at asparagine 3. Residues 24–48 (LFYALFLVMYLTTILGNLLIIVLVQ) form a helical membrane-spanning segment. Residues 49–55 (LDSQLHT) lie on the Cytoplasmic side of the membrane. Residues 56–77 (PMYLFLSNLSFSDLCFSSVTMP) traverse the membrane as a helical segment. Residues 78-98 (KLLQNMRSQDTSIPYGGCLAQ) lie on the Extracellular side of the membrane. A disulfide bond links cysteine 95 and cysteine 187. A helical transmembrane segment spans residues 99–118 (TYFFMVFGDMESFLLVAMAY). Topologically, residues 119-137 (DRYVAICFPLHYTSIMSPK) are cytoplasmic. A helical membrane pass occupies residues 138-156 (LCTCLVLLLWMLTTSHAMM). Residues 157–194 (HTLLAARLSFCENNVVLNFFCDLFVLLKLACSDTYINE) are Extracellular-facing. A helical membrane pass occupies residues 195-217 (LMIFIMSTLLIIIPFFLIVMSYA). Residues 218–234 (RIISSILKVPSTQGICK) lie on the Cytoplasmic side of the membrane. The chain crosses the membrane as a helical span at residues 235–258 (VFSTCGSHLSVVSLFYGTIIGLYL). The Extracellular segment spans residues 259-270 (CPAGNNSTVKEM). The chain crosses the membrane as a helical span at residues 271–290 (VMAMMYTVVTPMLNPFIYSL). Topologically, residues 291-310 (RNRDMKRALIRVICSMKITL) are cytoplasmic.

The protein belongs to the G-protein coupled receptor 1 family. As to expression, olfactory epithelium.

It is found in the cell membrane. Functionally, odorant receptor. The sequence is that of Olfactory receptor 1496 (Olr1496) from Rattus norvegicus (Rat).